Consider the following 256-residue polypeptide: Pyridoxine 5'-phosphate synthase (256 aa).

Positions 8 and 19 each coordinate 3-amino-2-oxopropyl phosphate. His44 (proton acceptor) is an active-site residue. Positions 46 and 51 each coordinate 1-deoxy-D-xylulose 5-phosphate. Glu74 (proton acceptor) is an active-site residue. A 1-deoxy-D-xylulose 5-phosphate-binding site is contributed by Thr111. The active-site Proton donor is His202. Residues Asp203 and 225–226 contribute to the 3-amino-2-oxopropyl phosphate site; that span reads GH.

This sequence belongs to the PNP synthase family. As to quaternary structure, homooctamer; tetramer of dimers.

Its subcellular location is the cytoplasm. It carries out the reaction 3-amino-2-oxopropyl phosphate + 1-deoxy-D-xylulose 5-phosphate = pyridoxine 5'-phosphate + phosphate + 2 H2O + H(+). Its pathway is cofactor biosynthesis; pyridoxine 5'-phosphate biosynthesis; pyridoxine 5'-phosphate from D-erythrose 4-phosphate: step 5/5. Functionally, catalyzes the complicated ring closure reaction between the two acyclic compounds 1-deoxy-D-xylulose-5-phosphate (DXP) and 3-amino-2-oxopropyl phosphate (1-amino-acetone-3-phosphate or AAP) to form pyridoxine 5'-phosphate (PNP) and inorganic phosphate. This chain is Pyridoxine 5'-phosphate synthase, found in Xanthomonas campestris pv. campestris (strain 8004).